A 357-amino-acid chain; its full sequence is Chorismate synthase (357 aa).

Residues 38 to 49 show a composition bias toward basic and acidic residues; the sequence is EKDIQPDLDRRK. Residues 38–60 are disordered; it reads EKDIQPDLDRRKPGTSRYTTPRR. The NADP(+) site is built by arginine 48 and arginine 54. Residues 125-127, 243-244, glycine 283, 298-302, and arginine 324 contribute to the FMN site; these read RSS, NA, and KPTSS.

It belongs to the chorismate synthase family. In terms of assembly, homotetramer. FMNH2 serves as cofactor.

It catalyses the reaction 5-O-(1-carboxyvinyl)-3-phosphoshikimate = chorismate + phosphate. The protein operates within metabolic intermediate biosynthesis; chorismate biosynthesis; chorismate from D-erythrose 4-phosphate and phosphoenolpyruvate: step 7/7. Catalyzes the anti-1,4-elimination of the C-3 phosphate and the C-6 proR hydrogen from 5-enolpyruvylshikimate-3-phosphate (EPSP) to yield chorismate, which is the branch point compound that serves as the starting substrate for the three terminal pathways of aromatic amino acid biosynthesis. This reaction introduces a second double bond into the aromatic ring system. The sequence is that of Chorismate synthase from Haemophilus influenzae (strain PittEE).